Here is a 493-residue protein sequence, read N- to C-terminus: Probable mannosyl-oligosaccharide alpha-1,2-mannosidase 1B (493 aa).

The first 18 residues, 1–18 (MHLPSLSVALALVSSSLA), serve as a signal peptide directing secretion. N-linked (GlcNAc...) asparagine glycosylation is found at asparagine 87 and asparagine 174. Cysteine 324 and cysteine 353 are joined by a disulfide. The active-site Proton donor is glutamate 367. Asparagine 489 carries an N-linked (GlcNAc...) asparagine glycan.

The protein belongs to the glycosyl hydrolase 47 family. As to quaternary structure, monomer. Requires Ca(2+) as cofactor. It depends on Mg(2+) as a cofactor.

The protein localises to the cytoplasmic vesicle lumen. The catalysed reaction is N(4)-(alpha-D-Man-(1-&gt;2)-alpha-D-Man-(1-&gt;2)-alpha-D-Man-(1-&gt;3)-[alpha-D-Man-(1-&gt;2)-alpha-D-Man-(1-&gt;3)-[alpha-D-Man-(1-&gt;2)-alpha-D-Man-(1-&gt;6)]-alpha-D-Man-(1-&gt;6)]-beta-D-Man-(1-&gt;4)-beta-D-GlcNAc-(1-&gt;4)-beta-D-GlcNAc)-L-asparaginyl-[protein] (N-glucan mannose isomer 9A1,2,3B1,2,3) + 4 H2O = N(4)-(alpha-D-Man-(1-&gt;3)-[alpha-D-Man-(1-&gt;3)-[alpha-D-Man-(1-&gt;6)]-alpha-D-Man-(1-&gt;6)]-beta-D-Man-(1-&gt;4)-beta-D-GlcNAc-(1-&gt;4)-beta-D-GlcNAc)-L-asparaginyl-[protein] (N-glucan mannose isomer 5A1,2) + 4 beta-D-mannose. The enzyme catalyses N(4)-(alpha-D-Man-(1-&gt;2)-alpha-D-Man-(1-&gt;2)-alpha-D-Man-(1-&gt;3)-[alpha-D-Man-(1-&gt;3)-[alpha-D-Man-(1-&gt;2)-alpha-D-Man-(1-&gt;6)]-alpha-D-Man-(1-&gt;6)]-beta-D-Man-(1-&gt;4)-beta-D-GlcNAc-(1-&gt;4)-beta-D-GlcNAc)-L-asparaginyl-[protein] (N-glucan mannose isomer 8A1,2,3B1,3) + 3 H2O = N(4)-(alpha-D-Man-(1-&gt;3)-[alpha-D-Man-(1-&gt;3)-[alpha-D-Man-(1-&gt;6)]-alpha-D-Man-(1-&gt;6)]-beta-D-Man-(1-&gt;4)-beta-D-GlcNAc-(1-&gt;4)-beta-D-GlcNAc)-L-asparaginyl-[protein] (N-glucan mannose isomer 5A1,2) + 3 beta-D-mannose. It participates in protein modification; protein glycosylation. In terms of biological role, involved in the maturation of Asn-linked oligosaccharides. Progressively trims alpha-1,2-linked mannose residues from Man(9)GlcNAc(2) to produce Man(5)GlcNAc(2). This chain is Probable mannosyl-oligosaccharide alpha-1,2-mannosidase 1B (mns1B), found in Neosartorya fischeri (strain ATCC 1020 / DSM 3700 / CBS 544.65 / FGSC A1164 / JCM 1740 / NRRL 181 / WB 181) (Aspergillus fischerianus).